A 196-amino-acid chain; its full sequence is Orotate phosphoribosyltransferase (196 aa).

Position 117–125 (117–125 (EDVVTTGLS)) interacts with 5-phospho-alpha-D-ribose 1-diphosphate. Orotate is bound by residues Thr121 and Arg149.

It belongs to the purine/pyrimidine phosphoribosyltransferase family. PyrE subfamily. In terms of assembly, homodimer. Mg(2+) is required as a cofactor.

The enzyme catalyses orotidine 5'-phosphate + diphosphate = orotate + 5-phospho-alpha-D-ribose 1-diphosphate. Its pathway is pyrimidine metabolism; UMP biosynthesis via de novo pathway; UMP from orotate: step 1/2. Functionally, catalyzes the transfer of a ribosyl phosphate group from 5-phosphoribose 1-diphosphate to orotate, leading to the formation of orotidine monophosphate (OMP). This chain is Orotate phosphoribosyltransferase, found in Sphingopyxis alaskensis (strain DSM 13593 / LMG 18877 / RB2256) (Sphingomonas alaskensis).